The primary structure comprises 210 residues: ATP-dependent Clp protease proteolytic subunit (210 aa).

Residue Ser-106 is the Nucleophile of the active site. His-131 is a catalytic residue.

It belongs to the peptidase S14 family. In terms of assembly, fourteen ClpP subunits assemble into 2 heptameric rings which stack back to back to give a disk-like structure with a central cavity, resembling the structure of eukaryotic proteasomes.

Its subcellular location is the cytoplasm. The catalysed reaction is Hydrolysis of proteins to small peptides in the presence of ATP and magnesium. alpha-casein is the usual test substrate. In the absence of ATP, only oligopeptides shorter than five residues are hydrolyzed (such as succinyl-Leu-Tyr-|-NHMec, and Leu-Tyr-Leu-|-Tyr-Trp, in which cleavage of the -Tyr-|-Leu- and -Tyr-|-Trp bonds also occurs).. Cleaves peptides in various proteins in a process that requires ATP hydrolysis. Has a chymotrypsin-like activity. Plays a major role in the degradation of misfolded proteins. This chain is ATP-dependent Clp protease proteolytic subunit, found in Bartonella henselae (strain ATCC 49882 / DSM 28221 / CCUG 30454 / Houston 1) (Rochalimaea henselae).